Reading from the N-terminus, the 436-residue chain is Serine--tRNA ligase (436 aa).

Residue 241-243 (TSE) participates in L-serine binding. ATP is bound at residue 272–274 (RAE). Position 295 (glutamate 295) interacts with L-serine. An ATP-binding site is contributed by 359–362 (EISS). Serine 395 is a binding site for L-serine.

It belongs to the class-II aminoacyl-tRNA synthetase family. Type-1 seryl-tRNA synthetase subfamily. In terms of assembly, homodimer. The tRNA molecule binds across the dimer.

The protein localises to the cytoplasm. The catalysed reaction is tRNA(Ser) + L-serine + ATP = L-seryl-tRNA(Ser) + AMP + diphosphate + H(+). It catalyses the reaction tRNA(Sec) + L-serine + ATP = L-seryl-tRNA(Sec) + AMP + diphosphate + H(+). Its pathway is aminoacyl-tRNA biosynthesis; selenocysteinyl-tRNA(Sec) biosynthesis; L-seryl-tRNA(Sec) from L-serine and tRNA(Sec): step 1/1. Functionally, catalyzes the attachment of serine to tRNA(Ser). Is also able to aminoacylate tRNA(Sec) with serine, to form the misacylated tRNA L-seryl-tRNA(Sec), which will be further converted into selenocysteinyl-tRNA(Sec). This chain is Serine--tRNA ligase, found in Beijerinckia indica subsp. indica (strain ATCC 9039 / DSM 1715 / NCIMB 8712).